Here is an 81-residue protein sequence, read N- to C-terminus: Large ribosomal subunit protein bL31 (81 aa).

Residues Cys-16, Cys-18, Cys-38, and Cys-41 each coordinate Zn(2+).

This sequence belongs to the bacterial ribosomal protein bL31 family. Type A subfamily. As to quaternary structure, part of the 50S ribosomal subunit. It depends on Zn(2+) as a cofactor.

In terms of biological role, binds the 23S rRNA. The sequence is that of Large ribosomal subunit protein bL31 from Mycobacterium marinum (strain ATCC BAA-535 / M).